Consider the following 201-residue polypeptide: ATP-dependent Clp protease proteolytic subunit (201 aa).

Residue Ser98 is the Nucleophile of the active site. His123 is a catalytic residue.

The protein belongs to the peptidase S14 family. In terms of assembly, fourteen ClpP subunits assemble into 2 heptameric rings which stack back to back to give a disk-like structure with a central cavity, resembling the structure of eukaryotic proteasomes.

Its subcellular location is the cytoplasm. The enzyme catalyses Hydrolysis of proteins to small peptides in the presence of ATP and magnesium. alpha-casein is the usual test substrate. In the absence of ATP, only oligopeptides shorter than five residues are hydrolyzed (such as succinyl-Leu-Tyr-|-NHMec, and Leu-Tyr-Leu-|-Tyr-Trp, in which cleavage of the -Tyr-|-Leu- and -Tyr-|-Trp bonds also occurs).. Functionally, cleaves peptides in various proteins in a process that requires ATP hydrolysis. Has a chymotrypsin-like activity. Plays a major role in the degradation of misfolded proteins. The polypeptide is ATP-dependent Clp protease proteolytic subunit (Rickettsia typhi (strain ATCC VR-144 / Wilmington)).